The primary structure comprises 144 residues: Sirohydrochlorin cobaltochelatase (144 aa).

The active-site Proton acceptor is H9. Co(2+) is bound at residue H9. Residue H9 participates in Ni(2+) binding. Substrate is bound by residues E45 and 70–75 (LAPGNH). Position 75 (H75) interacts with Co(2+). H75 provides a ligand contact to Ni(2+). The interval 89–112 (GDDEGGHHHHHDHEHHHHHHDTTA) is disordered. The span at 95 to 108 (HHHHHDHEHHHHHH) shows a compositional bias: basic residues.

Belongs to the CbiX family. CbiXS subfamily. As to quaternary structure, homotetramer; dimer of dimers.

It catalyses the reaction Co-sirohydrochlorin + 2 H(+) = sirohydrochlorin + Co(2+). It carries out the reaction Ni-sirohydrochlorin + 2 H(+) = sirohydrochlorin + Ni(2+). Its pathway is cofactor biosynthesis; adenosylcobalamin biosynthesis; cob(II)yrinate a,c-diamide from sirohydrochlorin (anaerobic route): step 1/10. Catalyzes the insertion of Co(2+) into sirohydrochlorin as part of the anaerobic pathway to cobalamin biosynthesis. Involved in the biosynthesis of the unique nickel-containing tetrapyrrole coenzyme F430, the prosthetic group of methyl-coenzyme M reductase (MCR), which plays a key role in methanogenesis and anaerobic methane oxidation. Catalyzes the insertion of Ni(2+) into sirohydrochlorin to yield Ni-sirohydrochlorin. This Methanococcus maripaludis (strain DSM 14266 / JCM 13030 / NBRC 101832 / S2 / LL) protein is Sirohydrochlorin cobaltochelatase.